A 341-amino-acid polypeptide reads, in one-letter code: Dual oxidase maturation factor 1 (341 aa).

Over 1–24 (MAALGHTLPFYTGTKPTFPMDTTL) the chain is Extracellular. A helical membrane pass occupies residues 25–45 (AVIITIFLTALVTFIIILPGI). Over 46-51 (RGKTRL) the chain is Cytoplasmic. Residues 52-72 (FWLLRVVTSLFIGAVILAVNF) traverse the membrane as a helical segment. The Extracellular portion of the chain corresponds to 73–183 (SSEWSVGHVN…RLAGHYASAM (111 aa)). N-linked (GlcNAc...) asparagine glycans are attached at residues Asn-84, Asn-109, and Asn-121. A helical membrane pass occupies residues 184–204 (LWVAFLCWLLANVMLSMPVLV). Tyr-205 is a topological domain (cytoplasmic). A helical membrane pass occupies residues 206–226 (GGHMLLATGLFQLLALFFFSM). The Extracellular portion of the chain corresponds to 227 to 249 (TTSLISPCPLRLGTAVLHTHHGP). A helical transmembrane segment spans residues 250-270 (AFWITLATGLLCILLGLVMAV). Over 271–341 (AHRMQPHRLK…EHPKESDCSL (71 aa)) the chain is Cytoplasmic.

Belongs to the DUOXA family. May interact with NUMB.

It localises to the membrane. Functionally, may be required for the maturation and the transport from the endoplasmic reticulum to the plasma membrane of functional DUOX1. In Mus musculus (Mouse), this protein is Dual oxidase maturation factor 1 (Duoxa1).